An 83-amino-acid chain; its full sequence is Normal mucosa of esophagus-specific gene 1 protein (83 aa).

This sequence belongs to the complex I NDUFA4 subunit family.

The protein resides in the nucleus. In Rattus norvegicus (Rat), this protein is Normal mucosa of esophagus-specific gene 1 protein (Nmes1).